We begin with the raw amino-acid sequence, 180 residues long: Chromosome-anchoring protein RacA (180 aa).

Positions T5 to Q25 form a DNA-binding region, H-T-H motif. Residues K67–P151 adopt a coiled-coil conformation.

This sequence belongs to the RacA family.

It localises to the cytoplasm. Functionally, required for the formation of axial filaments and for anchoring the origin regions at the cell poles in sporulating cells, thus ensuring proper chromosome segregation in the prespore. Binds in a dispersed manner throughout the chromosome but preferentially to sites clustered in the origin portion of the chromosome, causing condensation of the chromosome and its remodeling into an elongated, anchored structure. The chain is Chromosome-anchoring protein RacA from Bacillus cereus (strain B4264).